The following is a 308-amino-acid chain: Ornithine carbamoyltransferase (308 aa).

Residues 51 to 54, Gln78, Arg102, and 129 to 132 each bind carbamoyl phosphate; these read STRT and HPTQ. L-ornithine contacts are provided by residues Asn160, Asp224, and 228–229; that span reads SM. Carbamoyl phosphate-binding positions include 264-265 and Arg292; that span reads CL.

The protein belongs to the aspartate/ornithine carbamoyltransferase superfamily. OTCase family.

It localises to the cytoplasm. The enzyme catalyses carbamoyl phosphate + L-ornithine = L-citrulline + phosphate + H(+). It functions in the pathway amino-acid biosynthesis; L-arginine biosynthesis; L-arginine from L-ornithine and carbamoyl phosphate: step 1/3. Reversibly catalyzes the transfer of the carbamoyl group from carbamoyl phosphate (CP) to the N(epsilon) atom of ornithine (ORN) to produce L-citrulline. In Caldicellulosiruptor saccharolyticus (strain ATCC 43494 / DSM 8903 / Tp8T 6331), this protein is Ornithine carbamoyltransferase.